The primary structure comprises 443 residues: MSEMTPPQIVSELDKFIIGQEKAKRAVSIALRNRWRRMQLNSELRYEVTPKNILMIGPTGVGKTEIARRLAKLADSPFIKVEATKFTEVGYVGKEVDSIIRDLTDAAIKMIRIKNINKNKVRVEEIVEEKILDVLVPTPKKNWTESEKNESLAKTIQTFRKKLREGVLDEKEIEINILSTTMGVEIMAPPGMEELTNQLQSLFQNLGGHKKSSRRLKIKDAIVLLTEEEAAKLINQEEIKKEAINAVEQNGIVFIDEIDKICRRGDSSGPDISREGVQRDLLPLVEGCTVSTKHGMVKTDHILFIASGAFQTSTPSDLIPELQGRLPIKVELQALTIDDFEKILTEPTASITAQYKALMETEGVYINFTKEGIRNIAEAAWKVNESIENIGARRLHTVLEKLMEDISFNASDNKGNTIEINSNYVEEHLDQLTSNEDLGRFIL.

Residues I18, 60–65, D256, E321, and R393 contribute to the ATP site; that span reads GVGKTE.

Belongs to the ClpX chaperone family. HslU subfamily. In terms of assembly, a double ring-shaped homohexamer of HslV is capped on each side by a ring-shaped HslU homohexamer. The assembly of the HslU/HslV complex is dependent on binding of ATP.

Its subcellular location is the cytoplasm. Functionally, ATPase subunit of a proteasome-like degradation complex; this subunit has chaperone activity. The binding of ATP and its subsequent hydrolysis by HslU are essential for unfolding of protein substrates subsequently hydrolyzed by HslV. HslU recognizes the N-terminal part of its protein substrates and unfolds these before they are guided to HslV for hydrolysis. The protein is ATP-dependent protease ATPase subunit HslU of Buchnera aphidicola subsp. Acyrthosiphon pisum (strain 5A).